The following is a 153-amino-acid chain: Large ribosomal subunit protein uL13 (153 aa).

This sequence belongs to the universal ribosomal protein uL13 family. Part of the 50S ribosomal subunit.

This protein is one of the early assembly proteins of the 50S ribosomal subunit, although it is not seen to bind rRNA by itself. It is important during the early stages of 50S assembly. This is Large ribosomal subunit protein uL13 from Methylobacterium sp. (strain 4-46).